Here is an 88-residue protein sequence, read N- to C-terminus: RNA-binding protein Hfq (88 aa).

In terms of domain architecture, Sm spans 9-68 (DPFLNALRRERIPVSIYLVNGIKLQGQIESFDQFVILLKNTVNQMVYKHAISTVVPARAV). The disordered stretch occupies residues 66–88 (RAVSHHSASDRPQGERPQEKTEE). Over residues 72–88 (SASDRPQGERPQEKTEE) the composition is skewed to basic and acidic residues.

It belongs to the Hfq family. As to quaternary structure, homohexamer.

RNA chaperone that binds small regulatory RNA (sRNAs) and mRNAs to facilitate mRNA translational regulation in response to envelope stress, environmental stress and changes in metabolite concentrations. Also binds with high specificity to tRNAs. The protein is RNA-binding protein Hfq of Aliivibrio fischeri (strain ATCC 700601 / ES114) (Vibrio fischeri).